We begin with the raw amino-acid sequence, 229 residues long: Biosynthetic peptidoglycan transglycosylase (229 aa).

The chain crosses the membrane as a helical span at residues 14-34 (FITWRFLLVVVLLLLVLLLVL).

The protein belongs to the glycosyltransferase 51 family.

The protein resides in the cell inner membrane. The catalysed reaction is [GlcNAc-(1-&gt;4)-Mur2Ac(oyl-L-Ala-gamma-D-Glu-L-Lys-D-Ala-D-Ala)](n)-di-trans,octa-cis-undecaprenyl diphosphate + beta-D-GlcNAc-(1-&gt;4)-Mur2Ac(oyl-L-Ala-gamma-D-Glu-L-Lys-D-Ala-D-Ala)-di-trans,octa-cis-undecaprenyl diphosphate = [GlcNAc-(1-&gt;4)-Mur2Ac(oyl-L-Ala-gamma-D-Glu-L-Lys-D-Ala-D-Ala)](n+1)-di-trans,octa-cis-undecaprenyl diphosphate + di-trans,octa-cis-undecaprenyl diphosphate + H(+). It functions in the pathway cell wall biogenesis; peptidoglycan biosynthesis. In terms of biological role, peptidoglycan polymerase that catalyzes glycan chain elongation from lipid-linked precursors. The polypeptide is Biosynthetic peptidoglycan transglycosylase (Shewanella denitrificans (strain OS217 / ATCC BAA-1090 / DSM 15013)).